The sequence spans 562 residues: Terpene synthase 2 (562 aa).

Residues aspartate 315, aspartate 319, aspartate 459, and glutamate 467 each contribute to the Mg(2+) site. Residues 315 to 319 (DDEYD) carry the DDXXD motif motif.

Belongs to the terpene synthase family. Tpsa subfamily. Requires Mg(2+) as cofactor. It depends on Mn(2+) as a cofactor. In terms of tissue distribution, expressed at low levels in stems, leaves, roots and fruits.

It catalyses the reaction (2E,6E)-farnesyl diphosphate = delta-cadinene + diphosphate. The catalysed reaction is (2E,6E)-farnesyl diphosphate = alpha-cadinene + diphosphate. The enzyme catalyses (2E,6E)-farnesyl diphosphate + H2O = (-)-delta-cadinol + diphosphate. It participates in secondary metabolite biosynthesis; terpenoid biosynthesis. Sesquiterpene synthase involved in the biosynthesis of volatile compounds that contribute to the characteristic flavors of black pepper. Mediates the conversion of (2E,6E)-farnesyl diphosphate (FPP) into alpha-cadinene, delta-cadinene and delta-cadinol. In Piper nigrum (Black pepper), this protein is Terpene synthase 2.